Reading from the N-terminus, the 1009-residue chain is Helicase-like transcription factor (1009 aa).

Omega-N-methylarginine is present on Arg-27. The DNA-binding element occupies 38 to 287 (EFQDVIPPDD…FSEKDRPENV (250 aa)). Lys-112 is covalently cross-linked (Glycyl lysine isopeptide (Lys-Gly) (interchain with G-Cter in SUMO2)). Position 195 is a phosphotyrosine; by JAK2 (Tyr-195). A Glycyl lysine isopeptide (Lys-Gly) (interchain with G-Cter in SUMO2) cross-link involves residue Lys-211. Residue 294-301 (DDMGLGKT) participates in ATP binding. The segment at 336-365 (DDSMKLGGNNTSEKADGLSKDASRCSEQPS) is disordered. The span at 348–359 (EKADGLSKDASR) shows a compositional bias: basic and acidic residues. Residues Ser-397, Ser-398, and Ser-400 each carry the phosphoserine modification. The Helicase ATP-binding domain maps to 435–606 (IEDVAFACAL…WSLLSFLKLK (172 aa)). The DEGH box signature appears at 557–560 (DEGH). Thr-736 is subject to Phosphothreonine. The RING-type zinc finger occupies 760-801 (CAICLDSLTVPVITHCAHVFCKPCICQVIQNEQPHAKCPLCR). The Helicase C-terminal domain maps to 837-996 (ALMHALTDLR…TKKPNADEMK (160 aa)). The segment at 925–1009 (SRVFLMDPAW…INEIRTLIDL (85 aa)) is interaction with SP1 and SP3.

This sequence belongs to the SNF2/RAD54 helicase family. RAD16 subfamily. As to quaternary structure, interacts with SP1 and SP3 independently of DNA; the interaction with these transcriptional factors may be required for basal transcription of target genes. Interacts with EGR1; the interaction requires prior binding to DNA and represses c-Rel via a DNA looping mechanism. Interacts with GATA4. Interacts with PCNA; the interaction promotes polyubiquitination of PCNA through association with the UBE2B-RAD18 and UBE2V2-UBE2N ubiquitin ligase complexes. Interacts with RAD18, SHPRH, UBE2V2 and UBE2N. As to expression, expressed in brain, heart, kidney, liver, lung, pancreas, placenta and skeletal muscle.

The protein localises to the cytoplasm. It is found in the nucleus. The protein resides in the nucleolus. It localises to the nucleoplasm. The catalysed reaction is S-ubiquitinyl-[E2 ubiquitin-conjugating enzyme]-L-cysteine + [acceptor protein]-L-lysine = [E2 ubiquitin-conjugating enzyme]-L-cysteine + N(6)-ubiquitinyl-[acceptor protein]-L-lysine.. It participates in protein modification; protein ubiquitination. Its function is as follows. Has both helicase and E3 ubiquitin ligase activities. Possesses intrinsic ATP-dependent nucleosome-remodeling activity; This activity may be required for transcriptional activation or repression of specific target promoters. These may include the SERPINE1 and HIV-1 promoters and the SV40 enhancer, to which this protein can bind directly. Plays a role in error-free postreplication repair (PRR) of damaged DNA and maintains genomic stability through acting as a ubiquitin ligase for 'Lys-63'-linked polyubiquitination of chromatin-bound PCNA. The chain is Helicase-like transcription factor (HLTF) from Homo sapiens (Human).